The following is a 697-amino-acid chain: uncharacterized protein (697 aa).

The stretch at 516-545 (ADQSQNDVVALSSRIDRLTQEVVALQNSEK) forms a coiled coil.

This is an uncharacterized protein from Callospermophilus lateralis (Golden-mantled ground squirrel).